The primary structure comprises 409 residues: MSLIAIERVLCGWPKICRKLIVTSRSLTSGLRRALVKQPRKGGDVGKPGMELGRCSCFGLRVNLSNASVVYVGHRRYSTYEKTSTQILTKLFPQTSEESNDEESRERRKLEEEEEQKELERAFRRMKLGFGLFGIGSMLFSFWAIYFYGRPSLDEHGNEVIDEFSCLPQMQQLMWRTWKSVNRFQRFFKEPSRKKLLPDPLQPPYVQPPYTLVLEIKDVLVHPDWTYETGWRFKKRPGVDVFLKECAKYFEIVVYTAEQGVTVFPLVDALDPNGCIMYRLVRDSTHFDGGHHVKNLDNLNRDLKRVVVVDWDRNSTKFHPSNSFSIPRWSGNDNDTTLFELTSFLSVLGTSEIDDVREVLQYYNQFSDSLSQFRENQRKLGELMHAEEVEKTSKSRPVVKNWTRGFINH.

The transit peptide at 1–42 (MSLIAIERVLCGWPKICRKLIVTSRSLTSGLRRALVKQPRKG) directs the protein to the mitochondrion. The Mitochondrial matrix segment spans residues 43–127 (GDVGKPGMEL…ELERAFRRMK (85 aa)). Residues 93–114 (PQTSEESNDEESRERRKLEEEE) are disordered. The span at 102–111 (EESRERRKLE) shows a compositional bias: basic and acidic residues. The chain crosses the membrane as a helical span at residues 128–148 (LGFGLFGIGSMLFSFWAIYFY). At 149–409 (GRPSLDEHGN…KNWTRGFINH (261 aa)) the chain is on the mitochondrial intermembrane side. Positions 205-348 (YVQPPYTLVL…FELTSFLSVL (144 aa)) constitute an FCP1 homology domain.

The protein belongs to the TIM50 family. Component of the TIM23 complex at least composed of Tim23, Tim17 (Tim17a1, Tim17a2 or Tim17b1) and a Tim50. As to expression, exclusively expressed in the testis.

Its subcellular location is the mitochondrion inner membrane. Functionally, essential component of the TIM23 complex, a complex that mediates the translocation of transit peptide-containing proteins across the mitochondrial inner membrane. The protein is Mitochondrial import inner membrane translocase subunit TIM50-B (ttm2) of Drosophila melanogaster (Fruit fly).